The following is a 238-amino-acid chain: Transmembrane protein 127 (238 aa).

Met1 is modified (N-acetylmethionine). Gly residues predominate over residues 1–11 (MYAPGGAGLPG). A disordered region spans residues 1 to 27 (MYAPGGAGLPGGRRRRSPGGSALPKQP). A Phosphoserine modification is found at Ser17. 3 helical membrane passes run 96 to 116 (IAAF…LDVF), 130 to 150 (AFAH…SYWA), and 169 to 189 (VYVT…ASIL).

It belongs to the TMEM127 family. As to expression, widely expressed.

Its subcellular location is the cell membrane. It is found in the cytoplasm. Functionally, controls cell proliferation acting as a negative regulator of TOR signaling pathway mediated by mTORC1. May act as a tumor suppressor. This Homo sapiens (Human) protein is Transmembrane protein 127 (TMEM127).